The following is a 488-amino-acid chain: UDP-N-acetylmuramoyl-L-alanyl-D-glutamate--2,6-diaminopimelate ligase (488 aa).

UDP-N-acetyl-alpha-D-muramoyl-L-alanyl-D-glutamate-binding positions include leucine 24, serine 26, and 41–43; that span reads HQV. 113–119 is a binding site for ATP; sequence GTNGKTT. UDP-N-acetyl-alpha-D-muramoyl-L-alanyl-D-glutamate-binding positions include asparagine 154, 155–156, serine 182, glutamine 188, and arginine 190; that span reads TT. At lysine 222 the chain carries N6-carboxylysine. Residues arginine 386, 410 to 413, glycine 461, and glutamate 465 each bind meso-2,6-diaminopimelate; that span reads DNPR. The Meso-diaminopimelate recognition motif motif lies at 410 to 413; it reads DNPR.

The protein belongs to the MurCDEF family. MurE subfamily. Requires Mg(2+) as cofactor. Carboxylation is probably crucial for Mg(2+) binding and, consequently, for the gamma-phosphate positioning of ATP.

Its subcellular location is the cytoplasm. The enzyme catalyses UDP-N-acetyl-alpha-D-muramoyl-L-alanyl-D-glutamate + meso-2,6-diaminopimelate + ATP = UDP-N-acetyl-alpha-D-muramoyl-L-alanyl-gamma-D-glutamyl-meso-2,6-diaminopimelate + ADP + phosphate + H(+). It participates in cell wall biogenesis; peptidoglycan biosynthesis. In terms of biological role, catalyzes the addition of meso-diaminopimelic acid to the nucleotide precursor UDP-N-acetylmuramoyl-L-alanyl-D-glutamate (UMAG) in the biosynthesis of bacterial cell-wall peptidoglycan. This Haemophilus influenzae (strain PittGG) protein is UDP-N-acetylmuramoyl-L-alanyl-D-glutamate--2,6-diaminopimelate ligase.